The chain runs to 425 residues: Dihydroorotase (425 aa).

Residues H60 and H62 each contribute to the Zn(2+) site. Substrate contacts are provided by residues 62-64 and N94; that span reads HLR. Zn(2+)-binding residues include D152, H179, and H232. N278 serves as a coordination point for substrate. D305 lines the Zn(2+) pocket. D305 is a catalytic residue. H309 contributes to the substrate binding site.

This sequence belongs to the metallo-dependent hydrolases superfamily. DHOase family. Class I DHOase subfamily. It depends on Zn(2+) as a cofactor.

The catalysed reaction is (S)-dihydroorotate + H2O = N-carbamoyl-L-aspartate + H(+). It functions in the pathway pyrimidine metabolism; UMP biosynthesis via de novo pathway; (S)-dihydroorotate from bicarbonate: step 3/3. Catalyzes the reversible cyclization of carbamoyl aspartate to dihydroorotate. The polypeptide is Dihydroorotase (Syntrophotalea carbinolica (strain DSM 2380 / NBRC 103641 / GraBd1) (Pelobacter carbinolicus)).